A 2312-amino-acid polypeptide reads, in one-letter code: Protein Ycf2 (2312 aa).

3 disordered regions span residues 170–191 (SSQL…GTED), 223–253 (TEIE…EMNN), and 942–1009 (KRKK…KRKE). Positions 232-242 (KGLSGSSSKSR) are enriched in low complexity. Basic and acidic residues-rich tracts occupy residues 243–252 (LFTEGEKEMN) and 950–1007 (KRKE…PEKR). ATP is bound at residue 1439–1446 (GSIGSGRS). 3 disordered regions span residues 1513–1532 (YEDR…YEPG), 1857–1983 (LVGS…LLRP), and 2050–2166 (PAEE…DGFS). Residues 1863-1963 (TEEEVEGTEE…GEGTEDEEVE (101 aa)) are compositionally biased toward acidic residues. Residues 1964 to 1976 (GTEKDSSQFDNDR) are compositionally biased toward basic and acidic residues. 2 stretches are compositionally biased toward acidic residues: residues 2050-2067 (PAEE…EALE) and 2074-2149 (GEEE…ENDS).

It belongs to the Ycf2 family.

It localises to the plastid. The protein localises to the chloroplast stroma. Functionally, probable ATPase of unknown function. Its presence in a non-photosynthetic plant (Epifagus virginiana) and experiments in tobacco indicate that it has an essential function which is probably not related to photosynthesis. The chain is Protein Ycf2 from Oenothera parviflora (Small-flowered evening primrose).